A 218-amino-acid chain; its full sequence is Ras-related protein Rab-11B (218 aa).

Glycine 2 bears the N-acetylglycine mark. The residue at position 4 (arginine 4) is a Citrulline. Serine 20, glycine 21, glycine 23, lysine 24, serine 25, asparagine 26, asparagine 37, leucine 38, serine 40, serine 42, and threonine 43 together coordinate GTP. Serine 25 contacts Mg(2+). Positions 36–47 match the Switch 1 motif; sequence FNLESKSTIGVE. Mg(2+) is bound by residues threonine 43 and aspartate 66. A Switch 2 motif is present at residues 67-86; it reads TAGQERYRAITSAYYRGAVG. The GTP site is built by glycine 69, asparagine 124, lysine 125, aspartate 127, alanine 155, and leucine 156. The disordered stretch occupies residues 184 to 218; that stretch reads RAAHDESPGNNVVDISVPPTTDGQKPNKLQCCQNL. 2 S-geranylgeranyl cysteine lipidation sites follow: cysteine 214 and cysteine 215. At cysteine 215 the chain carries Cysteine methyl ester. The propeptide at 216 to 218 is removed in mature form; that stretch reads QNL.

It belongs to the small GTPase superfamily. Rab family. As to quaternary structure, interacts with KCNMA1. Interacts with RAB11FIP1, RAB11FIP2, RAB11FIP3 and RAB11FIP4. May interact with TBC1D14. Interacts with ATP6V1E1. Interacts with PI4KB. Interacts (GDP-bound form) with ZFYVE27. Interacts (GDP-bound form) with KIF5A in a ZFYVE27-dependent manner. Interacts with RELCH. Interacts (in GTP-bound form) with TBC1D8B (via domain Rab-GAP TBC). Forms a complex containing RAB11B, ASAP1, Rabin8/RAB3IP, RAP11FIP3 and ARF4. Interacts with WDR44. Mg(2+) is required as a cofactor. Post-translationally, citrullinated by PADI4. (Microbial infection) Glycosylated on arginine residues by S.typhimurium protein Ssek3.

The protein resides in the recycling endosome membrane. The protein localises to the cytoplasmic vesicle. It localises to the secretory vesicle. Its subcellular location is the synaptic vesicle membrane. It is found in the phagosome membrane. It catalyses the reaction GTP + H2O = GDP + phosphate + H(+). Its activity is regulated as follows. Regulated by guanine nucleotide exchange factors (GEFs) which promote the exchange of bound GDP for free GTP. Regulated by GTPase activating proteins (GAPs) which increase the GTP hydrolysis activity. Inhibited by GDP dissociation inhibitors (GDIs) which prevent Rab-GDP dissociation. In terms of biological role, the small GTPases Rab are key regulators of intracellular membrane trafficking, from the formation of transport vesicles to their fusion with membranes. Rabs cycle between an inactive GDP-bound form and an active GTP-bound form that is able to recruit to membranes different set of downstream effectors directly responsible for vesicle formation, movement, tethering and fusion. The small Rab GTPase RAB11B plays a role in endocytic recycling, regulating apical recycling of several transmembrane proteins including cystic fibrosis transmembrane conductance regulator/CFTR, epithelial sodium channel/ENaC, potassium voltage-gated channel, and voltage-dependent L-type calcium channel. May also regulate constitutive and regulated secretion, like insulin granule exocytosis. Required for melanosome transport and release from melanocytes. Also regulates V-ATPase intracellular transport in response to extracellular acidosis. Promotes Rabin8/RAB3IP preciliary vesicular trafficking to mother centriole by forming a ciliary targeting complex containing Rab11, ASAP1, Rabin8/RAB3IP, RAB11FIP3 and ARF4, thereby regulating ciliogenesis initiation. On the contrary, upon LPAR1 receptor signaling pathway activation, interaction with phosphorylated WDR44 prevents Rab11-RAB3IP-RAB11FIP3 complex formation and cilia growth. In Homo sapiens (Human), this protein is Ras-related protein Rab-11B.